A 215-amino-acid polypeptide reads, in one-letter code: Casparian strip membrane protein 3 (215 aa).

The segment at 1 to 26 (MDSEKTGEAKITIQEPKAADPKGKGI) is disordered. The Cytoplasmic portion of the chain corresponds to 1-55 (MDSEKTGEAKITIQEPKAADPKGKGIADAPPPPVVVTTAKAIQKLPRGGWKKGVA). The chain crosses the membrane as a helical span at residues 56 to 76 (IFDFVVRLCAIATGLAATGIM). The Extracellular segment spans residues 77-101 (GTTEQTLPFFTQFFQFHAEYNDLPT). Residues 102-122 (FMFFVFANGIASGYLILSLPF) traverse the membrane as a helical segment. Over 123 to 136 (SIVCIVRPLAIVPR) the chain is Cytoplasmic. Residues 137–157 (LLLIIFDTVVMALTIAAASAA) form a helical membrane-spanning segment. At 158-189 (AAIVYLAHNGNSNANWNAICQQFNDFCQQTST) the chain is on the extracellular side. A helical transmembrane segment spans residues 190-210 (AVVASFITAAMLTFLIVLSAF). Residues 211–215 (ALKRN) are Cytoplasmic-facing.

Belongs to the Casparian strip membrane proteins (CASP) family. Homodimer and heterodimers.

It is found in the cell membrane. Its function is as follows. Regulates membrane-cell wall junctions and localized cell wall deposition. Required for establishment of the Casparian strip membrane domain (CSD) and the subsequent formation of Casparian strips, a cell wall modification of the root endodermis that determines an apoplastic barrier between the intraorganismal apoplasm and the extraorganismal apoplasm and prevents lateral diffusion. This chain is Casparian strip membrane protein 3, found in Ricinus communis (Castor bean).